Reading from the N-terminus, the 390-residue chain is METFLFTSESVNEGHPDKLCDQVSDAILDACLEQDPESKVACETCTKTNMVMVFGEITTSAKVDYEKIVRSTCREIGFISADVGLDADKCNVLVNIEQQSPDIAQGVHGHLTKKPEDIGAGDQGHMFGYATDETPELMPLTHVLATKLGAKLTEVRKNKTCPWLRPDGKTQVTVEYKNEGGAMIPIRVHTVLISTQHDETVTNDEIAVDLKEHVIKPVIPAKYLDENTIFHLNPSGRFVIGGPHGDAGLTGRKIIIDTYGGWGAHGGGAFSGKDPTKVDRSGAYIVRQAAKSVVATGLARRCIVQVSYAIGVPEPLSVFVDTYKTGTIPDKDILVLIKEAFDFRPGMMAINLDLKRGGNFRFQKTAAYGHFGRDDPDFTWEVIKPLKPKA.

E9 contacts Mg(2+). H15 serves as a coordination point for ATP. Residue E43 coordinates K(+). L-methionine-binding residues include E56 and Q99. ATP contacts are provided by residues D167–K169, S235–F238, D246, R252–K253, A269, K273, and K277. Residue D246 coordinates L-methionine. K277 is an L-methionine binding site.

It belongs to the AdoMet synthase family. In terms of assembly, homotetramer. It depends on Mn(2+) as a cofactor. Requires Mg(2+) as cofactor. The cofactor is Co(2+). K(+) is required as a cofactor. As to expression, mostly expressed in flowers, seedpods and roots, and, to a lower extent, in stems and leaves.

The protein localises to the cytoplasm. The catalysed reaction is L-methionine + ATP + H2O = S-adenosyl-L-methionine + phosphate + diphosphate. The protein operates within amino-acid biosynthesis; S-adenosyl-L-methionine biosynthesis; S-adenosyl-L-methionine from L-methionine: step 1/1. Catalyzes the formation of S-adenosylmethionine from methionine and ATP. The reaction comprises two steps that are both catalyzed by the same enzyme: formation of S-adenosylmethionine (AdoMet) and triphosphate, and subsequent hydrolysis of the triphosphate. The chain is S-adenosylmethionine synthase 4 (MSAMS4) from Brassica juncea (Indian mustard).